The following is a 101-amino-acid chain: Citrate lyase acyl carrier protein (101 aa).

Ser14 bears the O-(phosphoribosyl dephospho-coenzyme A)serine mark.

Belongs to the CitD family. Oligomer with a subunit composition of (alpha,beta,gamma)6.

It is found in the cytoplasm. Its function is as follows. Covalent carrier of the coenzyme of citrate lyase. The protein is Citrate lyase acyl carrier protein of Lacticaseibacillus casei (strain BL23) (Lactobacillus casei).